Reading from the N-terminus, the 332-residue chain is Anthranilate phosphoribosyltransferase (332 aa).

5-phospho-alpha-D-ribose 1-diphosphate-binding positions include Gly78, 81-82 (GD), Thr86, 88-91 (NVST), 106-114 (KHGNRAASS), and Ala118. Gly78 contributes to the anthranilate binding site. Ser90 contacts Mg(2+). Anthranilate is bound at residue Asn109. Arg164 is an anthranilate binding site. 2 residues coordinate Mg(2+): Asp223 and Glu224.

This sequence belongs to the anthranilate phosphoribosyltransferase family. In terms of assembly, homodimer. Requires Mg(2+) as cofactor.

It carries out the reaction N-(5-phospho-beta-D-ribosyl)anthranilate + diphosphate = 5-phospho-alpha-D-ribose 1-diphosphate + anthranilate. It participates in amino-acid biosynthesis; L-tryptophan biosynthesis; L-tryptophan from chorismate: step 2/5. Catalyzes the transfer of the phosphoribosyl group of 5-phosphorylribose-1-pyrophosphate (PRPP) to anthranilate to yield N-(5'-phosphoribosyl)-anthranilate (PRA). The sequence is that of Anthranilate phosphoribosyltransferase from Sphingopyxis alaskensis (strain DSM 13593 / LMG 18877 / RB2256) (Sphingomonas alaskensis).